A 932-amino-acid chain; its full sequence is Protein translocase subunit SecA (932 aa).

Residues Gln87, 105–109, and Asp515 contribute to the ATP site; that span reads GEGKT. The Zn(2+) site is built by Cys916, Cys918, Cys927, and His928.

The protein belongs to the SecA family. As to quaternary structure, monomer and homodimer. Part of the essential Sec protein translocation apparatus which comprises SecA, SecYEG and auxiliary proteins SecDF-YajC and YidC. Requires Zn(2+) as cofactor.

It is found in the cell inner membrane. The protein resides in the cytoplasm. The enzyme catalyses ATP + H2O + cellular proteinSide 1 = ADP + phosphate + cellular proteinSide 2.. In terms of biological role, part of the Sec protein translocase complex. Interacts with the SecYEG preprotein conducting channel. Has a central role in coupling the hydrolysis of ATP to the transfer of proteins into and across the cell membrane, serving both as a receptor for the preprotein-SecB complex and as an ATP-driven molecular motor driving the stepwise translocation of polypeptide chains across the membrane. This chain is Protein translocase subunit SecA, found in Burkholderia multivorans (strain ATCC 17616 / 249).